Consider the following 850-residue polypeptide: Protein translocase subunit SecA 2 (850 aa).

Residues Gln83, Gly101–Thr105, and Asp491 each bind ATP.

This sequence belongs to the SecA family. Monomer and homodimer. Part of the essential Sec protein translocation apparatus which comprises SecA, SecYEG and auxiliary proteins SecDF. Other proteins may also be involved.

Its subcellular location is the cell membrane. The protein resides in the cytoplasm. It carries out the reaction ATP + H2O + cellular proteinSide 1 = ADP + phosphate + cellular proteinSide 2.. Functionally, part of the Sec protein translocase complex. Interacts with the SecYEG preprotein conducting channel. Has a central role in coupling the hydrolysis of ATP to the transfer of proteins into and across the cell membrane, serving as an ATP-driven molecular motor driving the stepwise translocation of polypeptide chains across the membrane. In Mycolicibacterium vanbaalenii (strain DSM 7251 / JCM 13017 / BCRC 16820 / KCTC 9966 / NRRL B-24157 / PYR-1) (Mycobacterium vanbaalenii), this protein is Protein translocase subunit SecA 2.